We begin with the raw amino-acid sequence, 442 residues long: MAADPSPPSAMAQPRPLNLNNEVVKMRKEVKRIRVLVIRKLVRSVSRLKSKKGSEDALLKNQRRAQRLLQEIHAMKELKPDVITKSALNDDINFEKTCKKPDSTATERAIARLAVHPLLKRKVDALKAAIQAFKDARQNAPEAESSKSASKESQCEDIPRSQAEASESQHPERTVVGEQKGKDKDPTTAKKAGSGSKEKLAKGKQGPKAVATPHSPGKPSEKGAGINSERQGAPTPGNHSQGKASTRTTEDSVCEPDDNSISKEEVSEEEKEYFDDSTEERFYKQSSASEDSDSGDDFFIGKVRRTRKKECAVPSSAKEQKPLPKVSSKTNTLETHWDIRNDKHKLIPEARKLESVFFHSLSGPKSSRRDPREQAPKNKAPDIPENEPPIQNKFTKSARRGFESAKQPSYAPLHPSWEASRRRKEQQSKIAVFQGKKITFDD.

2 coiled-coil regions span residues 55 to 77 (EDAL…AMKE) and 118 to 140 (LLKR…RQNA). Disordered stretches follow at residues 137 to 336 (RQNA…LETH) and 358 to 442 (FHSL…TFDD). Basic and acidic residues-rich tracts occupy residues 149–159 (ASKESQCEDIP) and 167–188 (ESQH…DPTT). Lys-202 participates in a covalent cross-link: Glycyl lysine isopeptide (Lys-Gly) (interchain with G-Cter in SUMO2). A Phosphoserine modification is found at Ser-215. A compositionally biased stretch (polar residues) spans 237–247 (GNHSQGKASTR). The span at 266–278 (VSEEEKEYFDDST) shows a compositional bias: acidic residues. A phosphoserine mark is found at Ser-277, Ser-292, and Ser-294. Residue Lys-329 forms a Glycyl lysine isopeptide (Lys-Gly) (interchain with G-Cter in SUMO2) linkage. Residue Ser-362 is modified to Phosphoserine. A compositionally biased stretch (basic and acidic residues) spans 367–382 (SRRDPREQAPKNKAPD).

As to quaternary structure, interacts with SRF. Forms complexes with SRF and SRF cofactors ARID2, MYOCD and NKX2-5. Interacts with the N-terminus of SLC2A4.

The protein localises to the cytoplasm. It localises to the perinuclear region. May be involved in regulating transcriptional activation of cardiac genes during the aging process. May play a role in biosynthesis and/or processing of SLC2A4 in adipose cells. This is Serum response factor-binding protein 1 from Rattus norvegicus (Rat).